The chain runs to 248 residues: Transcriptional activator protein FnrL (248 aa).

Residues 154 to 232 form the HTH crp-type domain; the sequence is KTAREKIASL…KRHVIVTDFA (79 aa). Residues 191–210 constitute a DNA-binding region (H-T-H motif); that stretch reads REEMADYLGLTLETVSRQVS.

In terms of biological role, anaerobic regulatory protein; transcriptional activator of hemA. Appears to regulate other genes. This Cereibacter sphaeroides (strain ATCC 17023 / DSM 158 / JCM 6121 / CCUG 31486 / LMG 2827 / NBRC 12203 / NCIMB 8253 / ATH 2.4.1.) (Rhodobacter sphaeroides) protein is Transcriptional activator protein FnrL (fnrL).